The primary structure comprises 274 residues: Protein TIC 20-I, chloroplastic (274 aa).

Residues 1 to 65 (MITGYSTPSA…ELPRVSRGVP (65 aa)) constitute a chloroplast transit peptide. Transmembrane regions (helical) follow at residues 130–152 (LPYL…LHPF), 167–187 (IGRL…LGIV), 200–220 (VVMG…SKWM), and 229–249 (FGMH…LESI).

It belongs to the Tic20 family. Part of the Tic complex. Component of the 1-MD complex, composed of TIC20-I, TIC214, TIC100 and TIC56. Interacts with the translocating preproteins. Hydrolysis of ATP is essential for the formation of this complex. The 1-MD complex interacts with TIC21. Expressed in leaves, shoots and roots. High expression in mature photosynthetic tissues. Lower levels in non-photosynthetic tissues and roots.

It localises to the plastid. The protein localises to the chloroplast inner membrane. Involved in protein precursor import into chloroplasts. May be part of an intermediate translocation complex acting as a protein-conducting channel at the inner envelope. Seems to be specific for photosynthesis-related pre-proteins. Partially redundant with TIC20-IV, but not with TIC20-II or TIC20-V. This chain is Protein TIC 20-I, chloroplastic, found in Arabidopsis thaliana (Mouse-ear cress).